Here is an 89-residue protein sequence, read N- to C-terminus: Small ribosomal subunit protein uS15 (89 aa).

The span at 1-16 shows a compositional bias: basic and acidic residues; that stretch reads MSVADIKKQDIVKDNG. Residues 1-24 are disordered; it reads MSVADIKKQDIVKDNGRSANDTGS.

This sequence belongs to the universal ribosomal protein uS15 family. As to quaternary structure, part of the 30S ribosomal subunit. Forms a bridge to the 50S subunit in the 70S ribosome, contacting the 23S rRNA.

In terms of biological role, one of the primary rRNA binding proteins, it binds directly to 16S rRNA where it helps nucleate assembly of the platform of the 30S subunit by binding and bridging several RNA helices of the 16S rRNA. Functionally, forms an intersubunit bridge (bridge B4) with the 23S rRNA of the 50S subunit in the ribosome. The chain is Small ribosomal subunit protein uS15 from Ralstonia pickettii (strain 12J).